We begin with the raw amino-acid sequence, 657 residues long: Replication restart protein PriA (657 aa).

The Helicase ATP-binding domain occupies Ile-143–Leu-309. Residue Gly-156–Thr-163 participates in ATP binding. The DEAH box motif lies at Asp-252 to His-255. Zn(2+) contacts are provided by Cys-366, Cys-369, Cys-375, Cys-378, Cys-393, Cys-396, Cys-406, and Cys-409. One can recognise a Helicase C-terminal domain in the interval Ala-390–Phe-570.

Belongs to the helicase family. PriA subfamily. In terms of assembly, component of the replication restart primosome. Zn(2+) serves as cofactor.

The enzyme catalyses Couples ATP hydrolysis with the unwinding of duplex DNA by translocating in the 3'-5' direction.. It catalyses the reaction ATP + H2O = ADP + phosphate + H(+). Its function is as follows. Initiates the restart of stalled replication forks, which reloads the replicative helicase on sites other than the origin of replication. Recognizes and binds to abandoned replication forks and remodels them to uncover a helicase loading site. Promotes assembly of the primosome at these replication forks. This chain is Replication restart protein PriA, found in Treponema pallidum (strain Nichols).